The sequence spans 791 residues: Outer membrane protein assembly factor BamA (791 aa).

5 POTRA domains span residues 59-130 (NAIA…VTEK), 131-209 (PRID…VEEG), 212-298 (LYIK…VKEG), 301-383 (YKLG…IRKR), and 386-459 (VYIN…VKEQ).

Belongs to the BamA family. In terms of assembly, part of the Bam complex.

Its subcellular location is the cell outer membrane. Its function is as follows. Part of the outer membrane protein assembly complex, which is involved in assembly and insertion of beta-barrel proteins into the outer membrane. The chain is Outer membrane protein assembly factor BamA from Nitratidesulfovibrio vulgaris (strain ATCC 29579 / DSM 644 / CCUG 34227 / NCIMB 8303 / VKM B-1760 / Hildenborough) (Desulfovibrio vulgaris).